Reading from the N-terminus, the 73-residue chain is Large ribosomal subunit protein bL31 (73 aa).

The Zn(2+) site is built by C16, C18, C38, and C41.

It belongs to the bacterial ribosomal protein bL31 family. Type A subfamily. In terms of assembly, part of the 50S ribosomal subunit. Zn(2+) is required as a cofactor.

Its function is as follows. Binds the 23S rRNA. This is Large ribosomal subunit protein bL31 from Streptomyces avermitilis (strain ATCC 31267 / DSM 46492 / JCM 5070 / NBRC 14893 / NCIMB 12804 / NRRL 8165 / MA-4680).